We begin with the raw amino-acid sequence, 227 residues long: Phosphoribosylformylglycinamidine synthase subunit PurQ (227 aa).

In terms of domain architecture, Glutamine amidotransferase type-1 spans K2 to N226. C86 acts as the Nucleophile in catalysis. Active-site residues include H195 and E197.

As to quaternary structure, part of the FGAM synthase complex composed of 1 PurL, 1 PurQ and 2 PurS subunits.

The protein resides in the cytoplasm. It catalyses the reaction N(2)-formyl-N(1)-(5-phospho-beta-D-ribosyl)glycinamide + L-glutamine + ATP + H2O = 2-formamido-N(1)-(5-O-phospho-beta-D-ribosyl)acetamidine + L-glutamate + ADP + phosphate + H(+). It carries out the reaction L-glutamine + H2O = L-glutamate + NH4(+). It participates in purine metabolism; IMP biosynthesis via de novo pathway; 5-amino-1-(5-phospho-D-ribosyl)imidazole from N(2)-formyl-N(1)-(5-phospho-D-ribosyl)glycinamide: step 1/2. Functionally, part of the phosphoribosylformylglycinamidine synthase complex involved in the purines biosynthetic pathway. Catalyzes the ATP-dependent conversion of formylglycinamide ribonucleotide (FGAR) and glutamine to yield formylglycinamidine ribonucleotide (FGAM) and glutamate. The FGAM synthase complex is composed of three subunits. PurQ produces an ammonia molecule by converting glutamine to glutamate. PurL transfers the ammonia molecule to FGAR to form FGAM in an ATP-dependent manner. PurS interacts with PurQ and PurL and is thought to assist in the transfer of the ammonia molecule from PurQ to PurL. The protein is Phosphoribosylformylglycinamidine synthase subunit PurQ of Listeria monocytogenes serotype 4a (strain HCC23).